The following is a 342-amino-acid chain: Tetraacyldisaccharide 4'-kinase (342 aa).

68–75 (TVGGTGKT) serves as a coordination point for ATP.

It belongs to the LpxK family.

It carries out the reaction a lipid A disaccharide + ATP = a lipid IVA + ADP + H(+). The protein operates within glycolipid biosynthesis; lipid IV(A) biosynthesis; lipid IV(A) from (3R)-3-hydroxytetradecanoyl-[acyl-carrier-protein] and UDP-N-acetyl-alpha-D-glucosamine: step 6/6. In terms of biological role, transfers the gamma-phosphate of ATP to the 4'-position of a tetraacyldisaccharide 1-phosphate intermediate (termed DS-1-P) to form tetraacyldisaccharide 1,4'-bis-phosphate (lipid IVA). This chain is Tetraacyldisaccharide 4'-kinase, found in Burkholderia multivorans (strain ATCC 17616 / 249).